Consider the following 153-residue polypeptide: FAD synthase (153 aa).

ATP-binding positions include 9–10 (TF), 14–17 (HPGH), Asn-92, and Tyr-119.

Belongs to the archaeal FAD synthase family. As to quaternary structure, homodimer. A divalent metal cation serves as cofactor.

The catalysed reaction is FMN + ATP + H(+) = FAD + diphosphate. It participates in cofactor biosynthesis; FAD biosynthesis; FAD from FMN: step 1/1. Functionally, catalyzes the transfer of the AMP portion of ATP to flavin mononucleotide (FMN) to produce flavin adenine dinucleotide (FAD) coenzyme. The protein is FAD synthase of Methanosphaerula palustris (strain ATCC BAA-1556 / DSM 19958 / E1-9c).